The chain runs to 343 residues: Probable siderophore transport system permease protein YfhA (343 aa).

Transmembrane regions (helical) follow at residues 15–35 (WIVF…SAGL), 69–89 (ILTA…LQGL), 97–117 (PDII…MMFF), 130–150 (WLPA…YLLA), 160–180 (LVLI…LLMI), 204–224 (QHVK…FVAL), 249–269 (FFLL…AGTI), 289–309 (GALL…ADIV), and 317–337 (VEVP…IYLL).

The protein belongs to the binding-protein-dependent transport system permease family. FecCD subfamily. As to quaternary structure, the complex is composed of one ATP-binding protein (YusV), two transmembrane proteins (YfiZ and YfhA) and a solute-binding protein (YfiY).

The protein localises to the cell membrane. Functionally, part of the ABC transporter complex YfiYZ/YfhA/YusV involved in import of the iron-hydroxamate siderophores schizokinen, arthrobactin and corprogen. This Bacillus subtilis (strain 168) protein is Probable siderophore transport system permease protein YfhA (yfhA).